We begin with the raw amino-acid sequence, 368 residues long: Large ribosomal subunit protein mL46 (368 aa).

The disordered stretch occupies residues 53–81 (TATATTTTTLPPPHPPVTTSTGTHAATST). Over residues 69–81 (VTTSTGTHAATST) the composition is skewed to low complexity.

Belongs to the mitochondrion-specific ribosomal protein mL46 family. As to quaternary structure, component of the mitochondrial large ribosomal subunit (mt-LSU). Mature N.crassa 74S mitochondrial ribosomes consist of a small (37S) and a large (54S) subunit. The 37S small subunit contains a 16S ribosomal RNA (16S mt-rRNA) and 32 different proteins. The 54S large subunit contains a 23S rRNA (23S mt-rRNA) and 42 different proteins.

The protein resides in the mitochondrion. Functionally, component of the mitochondrial ribosome (mitoribosome), a dedicated translation machinery responsible for the synthesis of mitochondrial genome-encoded proteins, including at least some of the essential transmembrane subunits of the mitochondrial respiratory chain. The mitoribosomes are attached to the mitochondrial inner membrane and translation products are cotranslationally integrated into the membrane. This is Large ribosomal subunit protein mL46 (mrpl17) from Neurospora crassa (strain ATCC 24698 / 74-OR23-1A / CBS 708.71 / DSM 1257 / FGSC 987).